The sequence spans 203 residues: Peptidyl-tRNA hydrolase (203 aa).

Tyr14 contributes to the tRNA binding site. His19 acts as the Proton acceptor in catalysis. TRNA contacts are provided by Tyr64, Asn66, and Asn112.

This sequence belongs to the PTH family. As to quaternary structure, monomer.

It is found in the cytoplasm. It catalyses the reaction an N-acyl-L-alpha-aminoacyl-tRNA + H2O = an N-acyl-L-amino acid + a tRNA + H(+). In terms of biological role, hydrolyzes ribosome-free peptidyl-tRNAs (with 1 or more amino acids incorporated), which drop off the ribosome during protein synthesis, or as a result of ribosome stalling. Its function is as follows. Catalyzes the release of premature peptidyl moieties from peptidyl-tRNA molecules trapped in stalled 50S ribosomal subunits, and thus maintains levels of free tRNAs and 50S ribosomes. This Methylobacterium nodulans (strain LMG 21967 / CNCM I-2342 / ORS 2060) protein is Peptidyl-tRNA hydrolase.